Reading from the N-terminus, the 388-residue chain is Succinate--CoA ligase [ADP-forming] subunit beta (388 aa).

An ATP-grasp domain is found at 9–244 (KQLFAEFGLP…PSQEDEREAH (236 aa)). ATP-binding positions include K46, 53–55 (GRG), E99, S102, and E107. The Mg(2+) site is built by N199 and D213. Substrate contacts are provided by residues N264 and 321–323 (GIV).

This sequence belongs to the succinate/malate CoA ligase beta subunit family. Heterotetramer of two alpha and two beta subunits. It depends on Mg(2+) as a cofactor.

It catalyses the reaction succinate + ATP + CoA = succinyl-CoA + ADP + phosphate. The enzyme catalyses GTP + succinate + CoA = succinyl-CoA + GDP + phosphate. The protein operates within carbohydrate metabolism; tricarboxylic acid cycle; succinate from succinyl-CoA (ligase route): step 1/1. Succinyl-CoA synthetase functions in the citric acid cycle (TCA), coupling the hydrolysis of succinyl-CoA to the synthesis of either ATP or GTP and thus represents the only step of substrate-level phosphorylation in the TCA. The beta subunit provides nucleotide specificity of the enzyme and binds the substrate succinate, while the binding sites for coenzyme A and phosphate are found in the alpha subunit. This Vibrio parahaemolyticus serotype O3:K6 (strain RIMD 2210633) protein is Succinate--CoA ligase [ADP-forming] subunit beta.